Here is a 130-residue protein sequence, read N- to C-terminus: Protein ApaG (130 aa).

The region spanning 3 to 127 (RAVTRQIEVL…FSLDSPDIRR (125 aa)) is the ApaG domain.

The polypeptide is Protein ApaG (Afipia carboxidovorans (strain ATCC 49405 / DSM 1227 / KCTC 32145 / OM5) (Oligotropha carboxidovorans)).